The following is a 2962-amino-acid chain: Sex determination and dosage compensation protein sdc-2 (2962 aa).

Disordered stretches follow at residues 1-28 and 1061-1110; these read MSDE…ADPD and DKRS…QVDP. Acidic residues predominate over residues 15 to 27; it reads SFNESDSPDEADP. Coiled-coil stretches lie at residues 995–1085 and 1140–1268; these read LESA…LADK and REER…KRVS. Disordered regions lie at residues 1535-1554 and 2198-2227; these read PASL…GSPV and LDSS…NQLD. The span at 2212 to 2225 shows a compositional bias: acidic residues; it reads FEDSPSEDENDENQ.

Component of the SDC complex, which consists of sdc-1, sdc-2 and sdc-3. Within the complex, interacts with sdc-1 and sdc-3. Expressed in hermaphrodites (XX), but absent in males (XO) (at protein level).

It is found in the chromosome. Its function is as follows. Component of the SDC complex that functions in sex determination and in X chromosome dosage compensation specifically in hermaphrodite (XX) animals. Required for the recruitment of the condensin I-like dosage compensation complex to the male sex-determining autosomal gene her-1, thereby contributing to its repression and initiating hermaphrodite sexual development. Plays a central role in X-chromosome recognition and in the recruitment and assembly of the dosage compensation complex and the dosage compensation protein dpy-21 onto the X chromosomes in hermaphrodites, which leads to a reduction of X-linked gene transcription and an equalization of X-linked gene expression between the sexes. May confer protection against toxicity induced by heavy metals such as arsenite. In Caenorhabditis elegans, this protein is Sex determination and dosage compensation protein sdc-2.